Reading from the N-terminus, the 307-residue chain is tRNA dimethylallyltransferase (307 aa).

7–14 (GPTAGGKT) contributes to the ATP binding site. 9–14 (TAGGKT) is a substrate binding site. An interaction with substrate tRNA region spans residues 32–35 (DSRQ).

The protein belongs to the IPP transferase family. In terms of assembly, monomer. It depends on Mg(2+) as a cofactor.

It catalyses the reaction adenosine(37) in tRNA + dimethylallyl diphosphate = N(6)-dimethylallyladenosine(37) in tRNA + diphosphate. Functionally, catalyzes the transfer of a dimethylallyl group onto the adenine at position 37 in tRNAs that read codons beginning with uridine, leading to the formation of N6-(dimethylallyl)adenosine (i(6)A). This is tRNA dimethylallyltransferase from Elusimicrobium minutum (strain Pei191).